Reading from the N-terminus, the 185-residue chain is UPF0149 protein PD_0802 (185 aa).

The protein belongs to the UPF0149 family.

The protein is UPF0149 protein PD_0802 of Xylella fastidiosa (strain Temecula1 / ATCC 700964).